The sequence spans 203 residues: Glycerol-3-phosphate acyltransferase (203 aa).

6 helical membrane-spanning segments follow: residues 1–21 (MPAW…GSIP), 52–72 (VGKG…AAAV), 73–93 (ALGS…GAVI), 115–135 (ILLA…LLGI), 140–160 (IVSF…WALG), and 161–181 (QPLP…AAHR).

This sequence belongs to the PlsY family. Probably interacts with PlsX.

It is found in the cell inner membrane. It catalyses the reaction an acyl phosphate + sn-glycerol 3-phosphate = a 1-acyl-sn-glycero-3-phosphate + phosphate. Its pathway is lipid metabolism; phospholipid metabolism. Functionally, catalyzes the transfer of an acyl group from acyl-phosphate (acyl-PO(4)) to glycerol-3-phosphate (G3P) to form lysophosphatidic acid (LPA). This enzyme utilizes acyl-phosphate as fatty acyl donor, but not acyl-CoA or acyl-ACP. This is Glycerol-3-phosphate acyltransferase from Synechococcus sp. (strain JA-3-3Ab) (Cyanobacteria bacterium Yellowstone A-Prime).